We begin with the raw amino-acid sequence, 340 residues long: Phosphoribosylformylglycinamidine cyclo-ligase (340 aa).

It belongs to the AIR synthase family.

The protein resides in the cytoplasm. It carries out the reaction 2-formamido-N(1)-(5-O-phospho-beta-D-ribosyl)acetamidine + ATP = 5-amino-1-(5-phospho-beta-D-ribosyl)imidazole + ADP + phosphate + H(+). The protein operates within purine metabolism; IMP biosynthesis via de novo pathway; 5-amino-1-(5-phospho-D-ribosyl)imidazole from N(2)-formyl-N(1)-(5-phospho-D-ribosyl)glycinamide: step 2/2. In Streptococcus pyogenes serotype M3 (strain ATCC BAA-595 / MGAS315), this protein is Phosphoribosylformylglycinamidine cyclo-ligase.